The chain runs to 207 residues: 3-demethoxyubiquinol 3-hydroxylase (207 aa).

Residues E56, E86, H89, E138, E170, and H173 each contribute to the Fe cation site.

This sequence belongs to the COQ7 family. Fe cation is required as a cofactor.

The protein resides in the cell membrane. The catalysed reaction is a 5-methoxy-2-methyl-3-(all-trans-polyprenyl)benzene-1,4-diol + AH2 + O2 = a 3-demethylubiquinol + A + H2O. It functions in the pathway cofactor biosynthesis; ubiquinone biosynthesis. Catalyzes the hydroxylation of 2-nonaprenyl-3-methyl-6-methoxy-1,4-benzoquinol during ubiquinone biosynthesis. In Dechloromonas aromatica (strain RCB), this protein is 3-demethoxyubiquinol 3-hydroxylase.